An 84-amino-acid chain; its full sequence is U21-theraphotoxin-Cg1c (84 aa).

Positions 1–21 (MKVSVLITLAVLGVMFLLTSA) are cleaved as a signal peptide. The propeptide occupies 22 to 47 (EERGSDQMDSPAWLKSMERIFQSEER). 3 disulfide bridges follow: Cys-49/Cys-63, Cys-56/Cys-68, and Cys-62/Cys-76.

Belongs to the neurotoxin 10 (Hwtx-1) family. 05 (F4a) subfamily. In terms of tissue distribution, expressed by the venom gland.

The protein localises to the secreted. In terms of biological role, probable ion channel inhibitor. The polypeptide is U21-theraphotoxin-Cg1c (Chilobrachys guangxiensis (Chinese earth tiger tarantula)).